The primary structure comprises 441 residues: Peroxisomal biogenesis factor 3 (441 aa).

The Peroxisomal portion of the chain corresponds to 1 to 17 (MAPNQRSRSLLQRHRGK). The chain crosses the membrane as a helical span at residues 18-39 (VLISLTGIAALFTTGSVVVFFV). The Cytoplasmic portion of the chain corresponds to 40–441 (KRWLYKQQLR…GVSSSFSFKP (402 aa)).

It belongs to the peroxin-3 family. Interacts with MSP1; leading to inhibit the translocase activity of MSP1.

The protein localises to the peroxisome membrane. Its function is as follows. Involved in peroxisome biosynthesis. Acts as a regulator of MSP1 by inhibiting the ability of MSP1 to unfold target proteins. This chain is Peroxisomal biogenesis factor 3 (PEX3), found in Saccharomyces cerevisiae (strain ATCC 204508 / S288c) (Baker's yeast).